The following is a 412-amino-acid chain: Tyrosine--tRNA ligase (412 aa).

Tyr-31 is a binding site for L-tyrosine. The short motif at 36–45 is the 'HIGH' region element; sequence PTAPSLHIGH. Tyr-162 and Gln-166 together coordinate L-tyrosine. The short motif at 222-226 is the 'KMSKS' region element; sequence KIGKT. Lys-225 contributes to the ATP binding site. In terms of domain architecture, S4 RNA-binding spans 345-412; it reads KRWLDVVVQL…KKKKQVIDLN (68 aa).

Belongs to the class-I aminoacyl-tRNA synthetase family. TyrS type 1 subfamily. As to quaternary structure, homodimer.

It localises to the cytoplasm. The catalysed reaction is tRNA(Tyr) + L-tyrosine + ATP = L-tyrosyl-tRNA(Tyr) + AMP + diphosphate + H(+). In terms of biological role, catalyzes the attachment of tyrosine to tRNA(Tyr) in a two-step reaction: tyrosine is first activated by ATP to form Tyr-AMP and then transferred to the acceptor end of tRNA(Tyr). The polypeptide is Tyrosine--tRNA ligase (Chlamydia muridarum (strain MoPn / Nigg)).